The primary structure comprises 546 residues: Immunoglobulin-like domain-containing receptor 1 (546 aa).

The first 23 residues, 1 to 23 (MAWPKLPAPWLLLCTWLPAGCLS), serve as a signal peptide directing secretion. One can recognise an Ig-like V-type domain in the interval 24-162 (LLVTVQHTER…TSGDPDKEVK (139 aa)). Topologically, residues 24–167 (LLVTVQHTER…DKEVKLIVLH (144 aa)) are extracellular. The cysteines at positions 45 and 145 are disulfide-linked. Residues 168–188 (WLTVIFIILGALLLLLLIGVC) traverse the membrane as a helical segment. Residues 189-546 (WCQCCPQYCC…SSHSGRSVVI (358 aa)) lie on the Cytoplasmic side of the membrane. The disordered stretch occupies residues 399 to 546 (WSGRHRSSRL…SSHSGRSVVI (148 aa)). Basic and acidic residues predominate over residues 442–457 (RCQERPRRPSPRESTQ). Residues 458–467 (RHGRRRRHRS) show a composition bias toward basic residues. Residues S499 and S501 each carry the phosphoserine modification. Basic and acidic residues predominate over residues 527–539 (GSVERRSEKDSSH).

Belongs to the immunoglobulin superfamily. LISCH7 family. As to quaternary structure, homooligomer. Interacts with MARVELD2 and OCLN; the interaction is required to recruit MARVELD2 to tricellular contacts. Interacts (via C-terminus) with TRA2A, TRA2B and SRSF1. Interacts with PLSCR1. In terms of tissue distribution, mainly expressed in prostate and to a lower extent in testis, pancreas, kidney, heart and liver.

The protein localises to the cell membrane. It localises to the cell junction. It is found in the tight junction. The protein resides in the cytoplasm. Its subcellular location is the cytosol. Functionally, maintains epithelial barrier function by recruiting MARVELD2/tricellulin to tricellular tight junctions (tTJs). Crucial for normal hearing by maintaining the structural and functional integrity of tTJs, which are critical for the survival of auditory neurosensory HCs. Mediates fatty acids and lipoproteins-stimulated CCK/cholecystokinin secretion in the small intestine. In the inner ear, may regulate alternative pre-mRNA splicing via binding to TRA2A, TRA2B and SRSF1. In terms of biological role, (Microbial infection) Promotes influenza virus infection by inhibiting viral nucleoprotein NP binding to PLSCR1 and thereby PLSCR1-mediated antiviral activity. This Homo sapiens (Human) protein is Immunoglobulin-like domain-containing receptor 1.